The sequence spans 72 residues: DNA-directed RNA polymerase subunit omega (72 aa).

The protein belongs to the RNA polymerase subunit omega family. The RNAP catalytic core consists of 2 alpha, 1 beta, 1 beta' and 1 omega subunit. When a sigma factor is associated with the core the holoenzyme is formed, which can initiate transcription.

The catalysed reaction is RNA(n) + a ribonucleoside 5'-triphosphate = RNA(n+1) + diphosphate. Its function is as follows. Promotes RNA polymerase assembly. Latches the N- and C-terminal regions of the beta' subunit thereby facilitating its interaction with the beta and alpha subunits. This Staphylococcus aureus (strain Mu3 / ATCC 700698) protein is DNA-directed RNA polymerase subunit omega.